Consider the following 852-residue polypeptide: Leucine--tRNA ligase (852 aa).

A 'HIGH' region motif is present at residues 51-61; that stretch reads PYPSGDLHMGH. The 'KMSKS' region signature appears at 615 to 619; it reads KMSKS. Lys-618 contributes to the ATP binding site.

The protein belongs to the class-I aminoacyl-tRNA synthetase family.

It is found in the cytoplasm. The catalysed reaction is tRNA(Leu) + L-leucine + ATP = L-leucyl-tRNA(Leu) + AMP + diphosphate. The protein is Leucine--tRNA ligase of Clavibacter sepedonicus (Clavibacter michiganensis subsp. sepedonicus).